The sequence spans 510 residues: Ent-sandaracopimaradiene 3-hydroxylase (510 aa).

Residues 4–24 (MLVAGAGAAAVAAVGGLVAAA) form a helical membrane-spanning segment. Residue cysteine 454 coordinates heme.

The protein belongs to the cytochrome P450 family. As to quaternary structure, interacts with the rice dwarf virus (RDV) P2 protein. Heme serves as cofactor. As to expression, expressed in leaf blades and sheaths, stems and panicles.

It is found in the membrane. The enzyme catalyses ent-sandaracopimara-8(14),15-diene + reduced [NADPH--hemoprotein reductase] + O2 = ent-sandaracopimaradien-3beta-ol + oxidized [NADPH--hemoprotein reductase] + H2O + H(+). It catalyses the reaction 9beta-pimara-7,15-diene + reduced [NADPH--hemoprotein reductase] + O2 = 9beta-pimara-7,15-diene-3beta-ol + oxidized [NADPH--hemoprotein reductase] + H2O + H(+). In terms of biological role, catalyzes the hydroxylation of ent-sandaracopimaradiene at the C3alpha position to produce ent-3beta-hydroxy-sandaracopimaradiene, an intermediates for the biosynthesis of oryzalexin D and oryzalexin E phytoalexins. Catalyzes the hydroxylation of ent-cassadiene at the C3alpha position to produce 3alpha-hydroxy-ent-cassadiene, which may be an intermediate for the biosynthesis of phytocassane phytoalexins. Catalyzes the hydroxylation of syn-pimaradiene (9-beta-pimara-7,15-diene) at the C3beta position to produce 3-beta-syn-pimaradiene. Can hydroxylate ent-kaurene in vitro, but the product is not ent-kauren-19-ol as expected for ent-kaurene oxidase activity. This is Ent-sandaracopimaradiene 3-hydroxylase from Oryza sativa subsp. japonica (Rice).